We begin with the raw amino-acid sequence, 82 residues long: MAVKIRLARCGRKKRPFYRMVVADERYARDGRFIEKVGTYNPLVNPAEVVVAKDRVEHWLGQGAQATRTVKSILKKEGVAVS.

The protein belongs to the bacterial ribosomal protein bS16 family.

This chain is Small ribosomal subunit protein bS16, found in Desulfosudis oleivorans (strain DSM 6200 / JCM 39069 / Hxd3) (Desulfococcus oleovorans).